We begin with the raw amino-acid sequence, 321 residues long: Auxin-responsive protein IAA8 (321 aa).

Residues Leu54 to Leu58 carry the EAR-like (transcriptional repression) motif. A PB1 domain is found at Val199 to Gly301.

It belongs to the Aux/IAA family. As to quaternary structure, homodimers and heterodimers. Interacts with TPL. As to expression, highly expressed in the whole plant.

The protein localises to the nucleus. Functionally, aux/IAA proteins are short-lived transcriptional factors that function as repressors of early auxin response genes at low auxin concentrations. Repression is thought to result from the interaction with auxin response factors (ARFs), proteins that bind to the auxin-responsive promoter element (AuxRE). Formation of heterodimers with ARF proteins may alter their ability to modulate early auxin response genes expression. This Arabidopsis thaliana (Mouse-ear cress) protein is Auxin-responsive protein IAA8 (IAA8).